We begin with the raw amino-acid sequence, 358 residues long: Heme A synthase (358 aa).

8 helical membrane passes run 22 to 42, 107 to 127, 133 to 153, 172 to 192, 208 to 228, 269 to 289, 302 to 322, and 324 to 344; these read IQVWLYSILLLCLAIVLVGGA, VLGRLVGLVALLGLIWFWATK, ILFPLIVVPILIAFQGFIGWW, LAFHLITACLVIIFVTYLSRG, FAAWLVILVLIEIYLGALVAG, FIHRFFAYFLFIVSALHAFYV, AFLIFFIIIIQAILGILTLLH, and VPISLGLIHQSMALVVLCFAV. H271 contributes to the heme binding site. H332 lines the heme pocket.

This sequence belongs to the COX15/CtaA family. Type 2 subfamily. As to quaternary structure, interacts with CtaB. It depends on heme b as a cofactor.

The protein resides in the cell membrane. It catalyses the reaction Fe(II)-heme o + 2 A + H2O = Fe(II)-heme a + 2 AH2. The protein operates within porphyrin-containing compound metabolism; heme A biosynthesis; heme A from heme O: step 1/1. Its function is as follows. Catalyzes the conversion of heme O to heme A by two successive hydroxylations of the methyl group at C8. The first hydroxylation forms heme I, the second hydroxylation results in an unstable dihydroxymethyl group, which spontaneously dehydrates, resulting in the formyl group of heme A. This is Heme A synthase from Bartonella tribocorum (strain CIP 105476 / IBS 506).